The sequence spans 141 residues: Large ribosomal subunit protein uL13 (141 aa).

This sequence belongs to the universal ribosomal protein uL13 family. Part of the 50S ribosomal subunit.

Functionally, this protein is one of the early assembly proteins of the 50S ribosomal subunit, although it is not seen to bind rRNA by itself. It is important during the early stages of 50S assembly. The sequence is that of Large ribosomal subunit protein uL13 from Sulfurovum sp. (strain NBC37-1).